Consider the following 416-residue polypeptide: Choline/ethanolaminephosphotransferase 1 (416 aa).

Residues 1-20 (MSGHRSTRKRCGDSHPESPV) are disordered. Phosphoserine is present on serine 18. Residue threonine 40 is modified to Phosphothreonine. Asparagine 86 is a binding site for CDP-choline. A run of 2 helical transmembrane segments spans residues 89 to 108 (TIIG…FYCP) and 116 to 133 (LWAY…QSLD). Aspartate 133 serves as a coordination point for Mg(2+). The N-linked (GlcNAc...) asparagine glycan is linked to asparagine 144. A CDP-choline-binding site is contributed by glutamate 151. Aspartate 154 contacts Mg(2+). Residue histidine 155 is the Proton acceptor of the active site. 8 helical membrane passes run 156-176 (GCDS…VQLG), 180-199 (DWMF…AHWQ), 210-230 (IIDV…AVIG), 246-267 (MKLF…NYFR), 286-306 (VLSP…IYKK), 315-334 (HPCL…TNKL), 349-363 (TAFI…DQYF), and 368-388 (DEYI…IRYC). Aspartate 158 contacts Mg(2+).

Belongs to the CDP-alcohol phosphatidyltransferase class-I family. In terms of assembly, homodimer. Mg(2+) is required as a cofactor. The cofactor is Mn(2+).

It is found in the endoplasmic reticulum membrane. The protein localises to the nucleus membrane. It carries out the reaction CDP-ethanolamine + a 1,2-diacyl-sn-glycerol = a 1,2-diacyl-sn-glycero-3-phosphoethanolamine + CMP + H(+). The enzyme catalyses CDP-choline + a 1,2-diacyl-sn-glycerol = a 1,2-diacyl-sn-glycero-3-phosphocholine + CMP + H(+). It catalyses the reaction 1-O-alkyl-2-acyl-sn-glycerol + CDP-choline = a 1-O-alkyl-2-acyl-sn-glycero-3-phosphocholine + CMP + H(+). The catalysed reaction is a 1-O-(1Z-alkenyl)-2-acyl-sn-glycerol + CDP-choline = a 1-O-(1Z-alkenyl)-2-acyl-sn-glycero-3-phosphocholine + CMP + H(+). It carries out the reaction 1,2-dioctanoyl-sn-glycerol + CDP-choline = 1,2-dioctanoyl-sn-glycero-3-phosphocholine + CMP + H(+). The enzyme catalyses 1,2-didecanoyl-sn-glycerol + CDP-choline = 1,2-didecanoyl-sn-glycero-3-phosphocholine + CMP + H(+). It catalyses the reaction CDP-choline + 1,2-di-(9Z-octadecenoyl)-sn-glycerol = 1,2-di-(9Z-octadecenoyl)-sn-glycero-3-phosphocholine + CMP + H(+). The catalysed reaction is 1-hexadecanoyl-2-(9Z-octadecenoyl)-sn-glycerol + CDP-choline = 1-hexadecanoyl-2-(9Z-octadecenoyl)-sn-glycero-3-phosphocholine + CMP + H(+). It carries out the reaction CDP-ethanolamine + 1,2-di-(9Z-octadecenoyl)-sn-glycerol = 1,2-di-(9Z-octadecenoyl)-sn-glycero-3-phosphoethanolamine + CMP + H(+). The enzyme catalyses 1-hexadecanoyl-2-(9Z-octadecenoyl)-sn-glycerol + CDP-ethanolamine = 1-hexadecanoyl-2-(9Z-octadecenoyl)-sn-glycero-3-phosphoethanolamine + CMP + H(+). It catalyses the reaction 1-hexadecanoyl-2-(4Z,7Z,10Z,13Z,16Z,19Z-docosahexaenoyl)-sn-glycerol + CDP-choline = 1-hexadecanoyl-2-(4Z,7Z,10Z,13Z,16Z,19Z-docosahexaenoyl)-sn-glycero-3-phosphocholine + CMP + H(+). The catalysed reaction is 1,2-di-(9Z-hexadecenoyl)-sn-glycerol + CDP-choline = 1,2-di-(9Z-hexadecenoyl)-sn-glycero-3-phosphocholine + CMP + H(+). It carries out the reaction 1,2-di-(9Z-hexadecenoyl)-sn-glycerol + CDP-ethanolamine = 1,2-di-(9Z-hexadecenoyl)-sn-glycero-3-phosphoethanolamine + CMP + H(+). The enzyme catalyses 1-O-hexadecyl-2-acetyl-sn-glycerol + CDP-choline = 1-O-hexadecyl-2-acetyl-sn-glycero-3-phosphocholine + CMP + H(+). It catalyses the reaction 1-O-hexadecyl-2-(5Z,8Z,11Z,14Z-eicosatetraenoyl)-sn-glycerol + CDP-choline = 1-O-hexadecyl-2-(5Z,8Z,11Z,14Z)-eicosatetraenoyl-sn-glycero-3-phosphocholine + CMP + H(+). The protein operates within phospholipid metabolism; phosphatidylethanolamine biosynthesis; phosphatidylethanolamine from ethanolamine: step 3/3. Its pathway is phospholipid metabolism; phosphatidylcholine biosynthesis; phosphatidylcholine from phosphocholine: step 2/2. Its function is as follows. Catalyzes both phosphatidylcholine and phosphatidylethanolamine biosynthesis from CDP-choline and CDP-ethanolamine, respectively. Involved in protein-dependent process of phospholipid transport to distribute phosphatidyl choline to the lumenal surface. Has a higher cholinephosphotransferase activity than ethanolaminephosphotransferase activity. The protein is Choline/ethanolaminephosphotransferase 1 of Rattus norvegicus (Rat).